The following is a 627-amino-acid chain: uncharacterized protein (627 aa).

Over 1–32 the chain is Extracellular; it reads MVDDSNYLTPHETALAVVATAMKKARLQLDTL. Residues 33 to 53 traverse the membrane as a helical segment; the sequence is LINSILGGVLFSSGSFLLVAV. Over 54–66 the chain is Cytoplasmic; sequence YSEDPDIVARNPG. The helical transmembrane segment at 67–87 threads the bilayer; it reads IVNLITGVNFAMGLFYVVMMG. The Extracellular portion of the chain corresponds to 88–113; the sequence is ADLFNSNILFFSVGVLRKAVTIYDLM. A helical transmembrane segment spans residues 114-134; it reads ISWVVSWLGNIAGSLFVSYLF. At 135–165 the chain is on the cytoplasmic side; that stretch reads GHLSGISSQKLWIIGSRQIIEQKVSYSFVQT. Residues 166–186 form a helical membrane-spanning segment; sequence FLKGIACNFFVCLAIYLQLMA. Residues 187-192 lie on the Extracellular side of the membrane; that stretch reads KPIHVK. The helical transmembrane segment at 193–213 threads the bilayer; the sequence is FILMSFPIIDFIGIGFTHVVG. Residues 214 to 218 lie on the Cytoplasmic side of the membrane; it reads DMSAS. Residues 219 to 239 traverse the membrane as a helical segment; sequence FIAMLNGANVSVGKYIWKLLI. Topologically, residues 240–245 are extracellular; sequence PASLGN. Residues 246 to 266 traverse the membrane as a helical segment; the sequence is IVGGLFFSAVVPFYLHLVVVE. Topologically, residues 267-627 are cytoplasmic; sequence RDRKRLSLPE…FYNRHTSPQL (361 aa). Thr-305 bears the Phosphothreonine mark. Residues 512–537 are disordered; it reads PPILPRTTQDTFPHNAPASSPAYTDD. Residues 517 to 533 show a composition bias toward polar residues; sequence RTTQDTFPHNAPASSPA. A Phosphoserine modification is found at Ser-546. At Thr-588 the chain carries Phosphothreonine. The segment covering 605–614 has biased composition (basic and acidic residues); it reads STTRRQKITE. A disordered region spans residues 605–627; it reads STTRRQKITEPKNFYNRHTSPQL.

It belongs to the FNT transporter (TC 1.A.16) family.

Its subcellular location is the membrane. This is an uncharacterized protein from Saccharomyces cerevisiae (strain ATCC 204508 / S288c) (Baker's yeast).